A 149-amino-acid polypeptide reads, in one-letter code: 2S seed storage albumin protein (149 aa).

Positions 1–22 (MKLFIILATATLLIAATQAKYL) are cleaved as a signal peptide. Disulfide bonds link C38–C98, C52–C87, C88–C133, and C100–C140. 4 no IgE-binding regions span residues 41–53 (QVKMMEPELVKCN), 68–81 (ALSRIQGEGCESEE), 84–95 (LRGCCVAMKEME), and 97–105 (ECVCEWMKM). Residues 108–117 (ENQKGRIGET) are igE-binding. The interval 121-131 (KGIRDLKELPN) is no IgE-binding. An igE-binding region spans residues 132-141 (KCGISEMECH).

This sequence belongs to the 2S seed storage albumins family. In terms of tissue distribution, expressed in seeds (at protein level). Expressed in seeds.

Seed storage protein. This is 2S seed storage albumin protein from Fagopyrum tataricum (Tartarian buckwheat).